The sequence spans 320 residues: Acyl-coenzyme A thioesterase 8 (320 aa).

Catalysis depends on charge relay system residues D233, S255, and Q305. The short motif at 318 to 320 is the Microbody targeting signal element; sequence SKL.

This sequence belongs to the C/M/P thioester hydrolase family. In terms of assembly, homodimer.

The protein localises to the peroxisome matrix. It carries out the reaction choloyl-CoA + H2O = cholate + CoA + H(+). The catalysed reaction is chenodeoxycholoyl-CoA + H2O = chenodeoxycholate + CoA + H(+). It catalyses the reaction acetyl-CoA + H2O = acetate + CoA + H(+). The enzyme catalyses butanoyl-CoA + H2O = butanoate + CoA + H(+). It carries out the reaction hexanoyl-CoA + H2O = hexanoate + CoA + H(+). The catalysed reaction is octanoyl-CoA + H2O = octanoate + CoA + H(+). It catalyses the reaction decanoyl-CoA + H2O = decanoate + CoA + H(+). The enzyme catalyses dodecanoyl-CoA + H2O = dodecanoate + CoA + H(+). It carries out the reaction tetradecanoyl-CoA + H2O = tetradecanoate + CoA + H(+). The catalysed reaction is 4,8-dimethylnonanoyl-CoA + H2O = 4,8-dimethylnonanoate + CoA + H(+). It catalyses the reaction 2,6-dimethylheptanoyl-CoA + H2O = 2,6-dimethylheptanoate + CoA + H(+). The enzyme catalyses malonyl-CoA + H2O = malonate + CoA + H(+). It carries out the reaction acetoacetyl-CoA + H2O = acetoacetate + CoA + H(+). The catalysed reaction is propanoyl-CoA + H2O = propanoate + CoA + H(+). It catalyses the reaction succinyl-CoA + H2O = succinate + CoA + H(+). The enzyme catalyses glutaryl-CoA + H2O = glutarate + CoA + H(+). It carries out the reaction hexanedioyl-CoA + H2O = hexanedioate + CoA + H(+). The catalysed reaction is octanedioyl-CoA + H2O = octanedioate + CoA + H(+). It catalyses the reaction decanedioyl-CoA + H2O = decanedioate + CoA + H(+). The enzyme catalyses dodecanedioyl-CoA + H2O = dodecanedioate + CoA + H(+). It carries out the reaction (9Z)-tetradecenoyl-CoA + H2O = (9Z)-tetradecenoate + CoA + H(+). The catalysed reaction is hexadecanoyl-CoA + H2O = hexadecanoate + CoA + H(+). It catalyses the reaction (9Z)-hexadecenoyl-CoA + H2O = (9Z)-hexadecenoate + CoA + H(+). The enzyme catalyses octadecanoyl-CoA + H2O = octadecanoate + CoA + H(+). It carries out the reaction (9Z)-octadecenoyl-CoA + H2O = (9Z)-octadecenoate + CoA + H(+). The catalysed reaction is (9Z,12Z)-octadecadienoyl-CoA + H2O = (9Z,12Z)-octadecadienoate + CoA + H(+). It catalyses the reaction eicosanoyl-CoA + H2O = eicosanoate + CoA + H(+). The enzyme catalyses (5Z,8Z,11Z,14Z)-eicosatetraenoyl-CoA + H2O = (5Z,8Z,11Z,14Z)-eicosatetraenoate + CoA + H(+). It carries out the reaction (3S)-3-hydroxy-3-methylglutaryl-CoA + H2O = 3-hydroxy-3-methylglutarate + CoA + H(+). The catalysed reaction is 3alpha,7alpha,12alpha-trihydroxy-5beta-cholestan-26-oyl-CoA + H2O = 3alpha,7alpha,12alpha-trihydroxy-5beta-cholestan-26-oate + CoA + H(+). It catalyses the reaction 2-methyloctadecanoyl-CoA + H2O = 2-methyloctadecanoate + CoA + H(+). The enzyme catalyses prostaglandin F2alpha-CoA + H2O = prostaglandin F2alpha + CoA + H(+). Its activity is regulated as follows. Inhibited by CoASH (IC(50)=10-15 uM). Also inhibited by cysteine-reactive agents. Catalyzes the hydrolysis of acyl-CoAs into free fatty acids and coenzyme A (CoASH), regulating their respective intracellular levels. Displays no strong substrate specificity with respect to the carboxylic acid moiety of Acyl-CoAs. Hydrolyzes medium length (C2 to C20) straight-chain, saturated and unsaturated acyl-CoAS but is inactive towards substrates with longer aliphatic chains. Moreover, it catalyzes the hydrolysis of CoA esters of bile acids, such as choloyl-CoA and chenodeoxycholoyl-CoA and competes with bile acid CoA:amino acid N-acyltransferase (BAAT). Is also able to hydrolyze CoA esters of dicarboxylic acids. It is involved in the metabolic regulation of peroxisome proliferation. This Rattus norvegicus (Rat) protein is Acyl-coenzyme A thioesterase 8 (Acot8).